The sequence spans 104 residues: Integration host factor subunit beta (104 aa).

Belongs to the bacterial histone-like protein family. As to quaternary structure, heterodimer of an alpha and a beta chain.

Its function is as follows. This protein is one of the two subunits of integration host factor, a specific DNA-binding protein that functions in genetic recombination as well as in transcriptional and translational control. This Xylella fastidiosa (strain 9a5c) protein is Integration host factor subunit beta (ihfB).